Consider the following 138-residue polypeptide: Nucleoside diphosphate kinase (138 aa).

ATP-binding residues include lysine 9, phenylalanine 57, arginine 85, threonine 91, arginine 102, and asparagine 112. The active-site Pros-phosphohistidine intermediate is the histidine 115.

Belongs to the NDK family. Homotetramer. It depends on Mg(2+) as a cofactor.

It is found in the cytoplasm. The catalysed reaction is a 2'-deoxyribonucleoside 5'-diphosphate + ATP = a 2'-deoxyribonucleoside 5'-triphosphate + ADP. It catalyses the reaction a ribonucleoside 5'-diphosphate + ATP = a ribonucleoside 5'-triphosphate + ADP. In terms of biological role, major role in the synthesis of nucleoside triphosphates other than ATP. The ATP gamma phosphate is transferred to the NDP beta phosphate via a ping-pong mechanism, using a phosphorylated active-site intermediate. The polypeptide is Nucleoside diphosphate kinase (Exiguobacterium sibiricum (strain DSM 17290 / CCUG 55495 / CIP 109462 / JCM 13490 / 255-15)).